Reading from the N-terminus, the 239-residue chain is uncharacterized protein (239 aa).

This is an uncharacterized protein from Bacillus subtilis (strain 168).